The chain runs to 876 residues: Valine--tRNA ligase (876 aa).

Residues 44–54 (PNVTGKLHLGH) carry the 'HIGH' region motif. The 'KMSKS' region motif lies at 520–524 (KMSKS). Lys523 provides a ligand contact to ATP. A coiled-coil region spans residues 805 to 876 (LEGLIDMDKE…VKARIEQLKA (72 aa)).

The protein belongs to the class-I aminoacyl-tRNA synthetase family. ValS type 1 subfamily. Monomer.

It localises to the cytoplasm. It carries out the reaction tRNA(Val) + L-valine + ATP = L-valyl-tRNA(Val) + AMP + diphosphate. Its function is as follows. Catalyzes the attachment of valine to tRNA(Val). As ValRS can inadvertently accommodate and process structurally similar amino acids such as threonine, to avoid such errors, it has a 'posttransfer' editing activity that hydrolyzes mischarged Thr-tRNA(Val) in a tRNA-dependent manner. This Staphylococcus aureus (strain Mu3 / ATCC 700698) protein is Valine--tRNA ligase.